A 442-amino-acid polypeptide reads, in one-letter code: Protein translocase subunit SecF (442 aa).

Positions 1 to 39 are disordered; sequence MASKAKTGRDDEATSAVELTEATESAVARTDGDSTTDTA. 6 helical membrane-spanning segments follow: residues 67-87, 187-207, 218-238, 243-263, 301-321, and 331-351; these read WFGV…FRGF, ITKK…LYIT, AITA…LVGF, ATVI…VIVF, LIGV…LGVG, and LIGI…LLVT. The tract at residues 366–442 is disordered; it reads VLKRRNSGSP…PTGKRNAGRR (77 aa). A compositionally biased stretch (low complexity) spans 402–432; the sequence is QASSQSAPRAAQGSSKPAPGARPVRPVGTRR. Positions 433 to 442 are enriched in basic residues; sequence PTGKRNAGRR.

It belongs to the SecD/SecF family. SecF subfamily. Forms a complex with SecD. Part of the essential Sec protein translocation apparatus which comprises SecA, SecYEG and auxiliary proteins SecDF. Other proteins may also be involved.

Its subcellular location is the cell membrane. Part of the Sec protein translocase complex. Interacts with the SecYEG preprotein conducting channel. SecDF uses the proton motive force (PMF) to complete protein translocation after the ATP-dependent function of SecA. The protein is Protein translocase subunit SecF of Mycobacterium tuberculosis (strain ATCC 25618 / H37Rv).